A 118-amino-acid chain; its full sequence is DNA-binding protein Msp_0595 (118 aa).

Low complexity predominate over residues 15-44 (LKQQQLAAQQQQGASLEQMQQEEQARQQFE). Residues 15–45 (LKQQQLAAQQQQGASLEQMQQEEQARQQFEN) are disordered.

It belongs to the PDCD5 family.

The chain is DNA-binding protein Msp_0595 from Methanosphaera stadtmanae (strain ATCC 43021 / DSM 3091 / JCM 11832 / MCB-3).